The sequence spans 501 residues: Glycogenin-2 (501 aa).

Residues L42, T44, N45, Y48, and R110 each contribute to the UDP site. 14 residues coordinate UDP-alpha-D-glucose: L42, T44, N45, Y48, R110, K119, D135, A136, D137, N166, S167, D193, D196, and Q197. D135, A136, and D137 together coordinate UDP. D135 contributes to the Mn(2+) binding site. A Mn(2+)-binding site is contributed by D137. Residue Y228 is glycosylated (O-linked (Glc...) tyrosine). Residues H245, G248, and K251 each coordinate UDP. H245 serves as a coordination point for Mn(2+). UDP-alpha-D-glucose-binding residues include G248 and K251. S368, S399, and S459 each carry phosphoserine.

Homodimer, tightly complexed to glycogen synthase. Mn(2+) serves as cofactor. In terms of processing, self-glycosylated by the transfer of glucose residues from UDP-glucose to itself, forming an alpha-1,4-glycan of around 10 residues attached to Tyr-228. Detected in liver (at protein level). Expressed preferentially in liver, heart, and pancreas.

Its subcellular location is the cytoplasm. It is found in the nucleus. It carries out the reaction L-tyrosyl-[glycogenin] + UDP-alpha-D-glucose = alpha-D-glucosyl-L-tyrosyl-[glycogenin] + UDP + H(+). It catalyses the reaction [1,4-alpha-D-glucosyl](n)-L-tyrosyl-[glycogenin] + UDP-alpha-D-glucose = [1,4-alpha-D-glucosyl](n+1)-L-tyrosyl-[glycogenin] + UDP + H(+). It participates in glycan biosynthesis; glycogen biosynthesis. Glycogenin participates in the glycogen biosynthetic process along with glycogen synthase and glycogen branching enzyme. It catalyzes the formation of a short alpha (1,4)-glucosyl chain covalently attached via a glucose 1-O-tyrosyl linkage to internal tyrosine residues and these chains act as primers for the elongation reaction catalyzed by glycogen synthase. This chain is Glycogenin-2 (GYG2), found in Homo sapiens (Human).